A 363-amino-acid chain; its full sequence is MSRFLQAEINLKSLIHNFSKIKAHLRNTRVSCKIIAIVKADAYGHGAVEVARVFGLLGVDYLGVAFSEEAIVLREAGIKVPIIVLFDREIEGVFKYNLIPVIFDYRQAEFLSKEASRRGVILPVHIKVETGMGRLGIYENPCETIKKIAQLDNLKIDGVMSHFSRAEDLEWTQEQMKKFSKIREFLHNLGMKPLFHIANSQGLNYKEALFDAVRPGLMLYGYGAEGFIPCMTVKTKLLDIRKLPKGTPISYGGTFVTKKDSLIGVIPVGYADGYFRSLSNKAEVIVRGKRVPVVGTVCMDLTMIDLTDIQEVQIDDEVILLGKTGSEEITASHIAQWAGTIPYEVLTSFGGRARRKYIMEEEE.

The active-site Proton acceptor; specific for D-alanine is K39. K39 carries the post-translational modification N6-(pyridoxal phosphate)lysine. Residue R134 coordinates substrate. The active-site Proton acceptor; specific for L-alanine is the Y251. A substrate-binding site is contributed by M299.

Belongs to the alanine racemase family. Requires pyridoxal 5'-phosphate as cofactor.

The enzyme catalyses L-alanine = D-alanine. It functions in the pathway amino-acid biosynthesis; D-alanine biosynthesis; D-alanine from L-alanine: step 1/1. In terms of biological role, catalyzes the interconversion of L-alanine and D-alanine. May also act on other amino acids. The sequence is that of Alanine racemase (alr) from Thermodesulfovibrio yellowstonii (strain ATCC 51303 / DSM 11347 / YP87).